The sequence spans 143 residues: uncharacterized protein (143 aa).

The interval 35 to 59 (ITKDRGDRDDGRYGEPRIQRKPGQL) is disordered. Residues 36–52 (TKDRGDRDDGRYGEPRI) show a composition bias toward basic and acidic residues.

This is an uncharacterized protein from Streptomyces fradiae (Streptomyces roseoflavus).